A 315-amino-acid polypeptide reads, in one-letter code: N-acetyl-gamma-glutamyl-phosphate reductase (315 aa).

The active site involves Cys-117.

Belongs to the NAGSA dehydrogenase family. Type 2 subfamily.

It localises to the cytoplasm. The enzyme catalyses N-acetyl-L-glutamate 5-semialdehyde + phosphate + NADP(+) = N-acetyl-L-glutamyl 5-phosphate + NADPH + H(+). It participates in amino-acid biosynthesis; L-arginine biosynthesis; N(2)-acetyl-L-ornithine from L-glutamate: step 3/4. Its function is as follows. Catalyzes the NADPH-dependent reduction of N-acetyl-5-glutamyl phosphate to yield N-acetyl-L-glutamate 5-semialdehyde. This chain is N-acetyl-gamma-glutamyl-phosphate reductase, found in Burkholderia ambifaria (strain ATCC BAA-244 / DSM 16087 / CCUG 44356 / LMG 19182 / AMMD) (Burkholderia cepacia (strain AMMD)).